Here is a 45-residue protein sequence, read N- to C-terminus: Large ribosomal subunit protein bL34 (45 aa).

Positions 1–45 (MTKRTFGGTSRKRKRVSGFRVRMRTHTGRSVIRSRRKKGRSRIAV) are disordered. Positions 10 to 45 (SRKRKRVSGFRVRMRTHTGRSVIRSRRKKGRSRIAV) are enriched in basic residues.

This sequence belongs to the bacterial ribosomal protein bL34 family.

The protein is Large ribosomal subunit protein bL34 of Prochlorococcus marinus (strain SARG / CCMP1375 / SS120).